Consider the following 259-residue polypeptide: Proteasome subunit alpha 1 (259 aa).

Positions 231 to 259 (LVPAEPAAASESAPEPKPDTETKPADTQD) are disordered. The segment covering 233 to 243 (PAEPAAASESA) has biased composition (low complexity). The span at 244–259 (PEPKPDTETKPADTQD) shows a compositional bias: basic and acidic residues.

It belongs to the peptidase T1A family. As to quaternary structure, the 20S proteasome core is composed of 14 alpha and 14 beta subunits that assemble into four stacked heptameric rings, resulting in a barrel-shaped structure. The two inner rings, each composed of seven catalytic beta subunits, are sandwiched by two outer rings, each composed of seven alpha subunits. All four combinations of alpha- and beta-subunits (beta2-alpha1, beta2-alpha2, beta1-alpha2 and beta1-alpha1) yield fully assembled and proteolytically active proteasomes. The catalytic chamber with the active sites is on the inside of the barrel. Has probably a gated structure, the ends of the cylinder being occluded by the N-termini of the alpha-subunits. Is likely capped by the proteasome-associated ATPase, ARC. Post-translationally, the N-terminus is blocked.

Its subcellular location is the cytoplasm. It functions in the pathway protein degradation; proteasomal Pup-dependent pathway. Its activity is regulated as follows. The formation of the proteasomal ATPase ARC-20S proteasome complex, likely via the docking of the C-termini of ARC into the intersubunit pockets in the alpha-rings, may trigger opening of the gate for substrate entry. Interconversion between the open-gate and close-gate conformations leads to a dynamic regulation of the 20S proteasome proteolysis activity. Functionally, component of the proteasome core, a large protease complex with broad specificity involved in protein degradation. The R.erythropolis proteasomes are able to cleave oligopeptides after Tyr, Phe and Leu, very poorly after Arg but not after Glu. Thus, displays chymotrypsin-like activity, low trypsin-like activity but no caspase-like activity. This is Proteasome subunit alpha 1 from Rhodococcus erythropolis (Arthrobacter picolinophilus).